The primary structure comprises 363 residues: Endopolygalacturonase 1 (363 aa).

The first 17 residues, 1 to 17, serve as a signal peptide directing secretion; the sequence is MVSYLFVLGALASVAIA. Residues 18–26 constitute a propeptide that is removed on maturation; the sequence is SPVPELKAR. C29 and C44 form a disulfide bridge. 4 PbH1 repeats span residues 188-209, 210-230, 239-260, and 268-290; these read STGV…AVNS, GTNI…SIGS, VKSV…RIKT, and VSDI…VIEQ. D202 functions as the Proton donor in the catalytic mechanism. C204 and C220 are oxidised to a cystine. A glycan (N-linked (GlcNAc...) asparagine) is linked at N212. The active site involves H224. 2 disulfides stabilise this stretch: C330–C333 and C352–C363.

It belongs to the glycosyl hydrolase 28 family.

The protein localises to the secreted. It carries out the reaction (1,4-alpha-D-galacturonosyl)n+m + H2O = (1,4-alpha-D-galacturonosyl)n + (1,4-alpha-D-galacturonosyl)m.. In terms of biological role, involved in maceration and soft-rotting of plant tissue. Hydrolyzes the 1,4-alpha glycosidic bonds of de-esterified pectate in the smooth region of the plant cell wall. This Colletotrichum lindemuthianum (Bean anthracnose fungus) protein is Endopolygalacturonase 1 (PG1).